The following is a 173-amino-acid chain: Ribosome maturation factor RimM (173 aa).

The region spanning Glu-92–Ile-165 is the PRC barrel domain.

This sequence belongs to the RimM family. In terms of assembly, binds ribosomal protein uS19.

The protein localises to the cytoplasm. In terms of biological role, an accessory protein needed during the final step in the assembly of 30S ribosomal subunit, possibly for assembly of the head region. Essential for efficient processing of 16S rRNA. May be needed both before and after RbfA during the maturation of 16S rRNA. It has affinity for free ribosomal 30S subunits but not for 70S ribosomes. This Bradyrhizobium diazoefficiens (strain JCM 10833 / BCRC 13528 / IAM 13628 / NBRC 14792 / USDA 110) protein is Ribosome maturation factor RimM.